The sequence spans 930 residues: Kinesin-like protein KIN-7J (930 aa).

The Kinesin motor domain occupies 9-273 (KILVSVRVRP…TLGTVIRKLR (265 aa)). 95–102 (GQTSSGKT) is an ATP binding site. Disordered regions lie at residues 449–569 (LKNS…IGTD) and 655–686 (MQTK…SLKD). The segment covering 459–468 (SVEAQESQES) has biased composition (low complexity). Basic and acidic residues-rich tracts occupy residues 473-482 (EQMKNEERKM) and 533-558 (AKLD…KDCN). Low complexity predominate over residues 666 to 681 (TSSISFDSGSSTSIDT). Lysine 805 is covalently cross-linked (Glycyl lysine isopeptide (Lys-Gly) (interchain with G-Cter in ubiquitin)).

The protein belongs to the TRAFAC class myosin-kinesin ATPase superfamily. Kinesin family. KIN-7 subfamily.

The protein is Kinesin-like protein KIN-7J of Arabidopsis thaliana (Mouse-ear cress).